The following is a 208-amino-acid chain: Sodium/potassium-transporting ATPase subunit beta-1-interacting protein 2 (208 aa).

4 helical membrane passes run 1–23, 35–55, 64–84, and 148–168; these read MGYC…CVLE, APIL…FGTI, GYAV…CFYL, and VAHS…ACYV.

It belongs to the NKAIN family. As to quaternary structure, interacts with ATP1B1. In terms of tissue distribution, detected in the brain only and specifically in neurons; expressed in multiple regions such as cerebral cortex, thalamus, cerebellum, olfactory bulb and brainstem, but not in the hippocampus.

Its subcellular location is the cell membrane. This chain is Sodium/potassium-transporting ATPase subunit beta-1-interacting protein 2 (Nkain2), found in Mus musculus (Mouse).